Consider the following 92-residue polypeptide: Ezrin (92 aa).

Residues 1–72 (QLFDQVVKGF…PDFVFYAPRR (72 aa)) enclose the FERM domain. Residue lysine 15 is modified to N6-acetyllysine. The interval 42 to 92 (EIRNISFNDKKFVIKPIDKKAPDFVFYAPRRKPDTIEVQQMKLQDFEQKTK) is interaction with SCYL3.

As to quaternary structure, interacts with PALS1 and NHERF2. Found in a complex with EZR, PODXL and NHERF2. Interacts with MCC, PLEKHG6, PODXL, SCYL3/PACE1, NHERF1 and TMEM8B. Interacts (when phosphorylated) with FES/FPS. Interacts with dimeric S100P, the interaction may be activating through unmasking of F-actin binding sites. Identified in complexes that contain VIM, EZR, AHNAK, BFSP1, BFSP2, ANK2, PLEC, PRX and spectrin. Detected in a complex composed of at least EZR, AHNAK, PPL and PRX. Interacts with PDPN (via cytoplasmic domain); activates RHOA and promotes epithelial-mesenchymal transition. Interacts with SPN/CD43 cytoplasmic tail, CD44 and ICAM2. Interacts with CLIC5; may work together in a complex which also includes RDX and MYO6 to stabilize linkages between the plasma membrane and subjacent actin cytoskeleton at the base of stereocilia. In terms of processing, phosphorylated by tyrosine-protein kinases. Phosphorylation by ROCK2 suppresses the head-to-tail association of the N-terminal and C-terminal halves resulting in an opened conformation which is capable of actin and membrane-binding. Post-translationally, S-nitrosylation is induced by interferon-gamma and oxidatively-modified low-densitity lipoprotein (LDL(ox)) possibly implicating the iNOS-S100A8/9 transnitrosylase complex.

The protein resides in the apical cell membrane. It localises to the cell projection. Its subcellular location is the microvillus membrane. It is found in the ruffle membrane. The protein localises to the cytoplasm. The protein resides in the cell cortex. It localises to the cytoskeleton. Its subcellular location is the microvillus. With respect to regulation, a head-to-tail association, of the N-terminal and C-terminal halves results in a closed conformation (inactive form) which is incapable of actin or membrane-binding. Functionally, probably involved in connections of major cytoskeletal structures to the plasma membrane. In epithelial cells, required for the formation of microvilli and membrane ruffles on the apical pole. Along with PLEKHG6, required for normal macropinocytosis. This chain is Ezrin, found in Mesocricetus auratus (Golden hamster).